The chain runs to 410 residues: Peptidase T (410 aa).

His77 is a binding site for Zn(2+). Asp79 is a catalytic residue. Asp140 contributes to the Zn(2+) binding site. Glu174 (proton acceptor) is an active-site residue. Zn(2+) is bound by residues Glu175, Asp197, and His379.

It belongs to the peptidase M20B family. Requires Zn(2+) as cofactor.

The protein localises to the cytoplasm. The catalysed reaction is Release of the N-terminal residue from a tripeptide.. In terms of biological role, cleaves the N-terminal amino acid of tripeptides. The protein is Peptidase T of Desulfitobacterium hafniense (strain Y51).